The chain runs to 119 residues: Large ribosomal subunit protein bL20 (119 aa).

Belongs to the bacterial ribosomal protein bL20 family.

Binds directly to 23S ribosomal RNA and is necessary for the in vitro assembly process of the 50S ribosomal subunit. It is not involved in the protein synthesizing functions of that subunit. The chain is Large ribosomal subunit protein bL20 from Metamycoplasma arthritidis (strain 158L3-1) (Mycoplasma arthritidis).